The chain runs to 920 residues: Alpha-L-rhamnosidase (920 aa).

The signal sequence occupies residues 1-19; it reads MCVVRTFWFAVLTVIFAVS. The N-palmitoyl cysteine moiety is linked to residue Cys20. Cys20 carries S-diacylglycerol cysteine lipidation. Alpha-L-rhamnose contacts are provided by residues Asp500, 504–506, Asp513, and Trp565; that span reads RDE. Glu506 serves as the catalytic Proton donor. Glu779 serves as the catalytic Proton acceptor. Position 800 (His800) interacts with alpha-L-rhamnose.

It belongs to the glycosyl hydrolase 78 family.

Its subcellular location is the cell membrane. The catalysed reaction is Hydrolysis of terminal non-reducing alpha-L-rhamnose residues in alpha-L-rhamnosides.. Functionally, alpha-L-rhamnosidase involved in ulvan degradation. Ulvan is the main polysaccharide component of the Ulvales (green seaweed) cell wall. It is composed of disaccharide building blocks comprising 3-sulfated rhamnose (Rha3S) linked to D-glucuronic acid (GlcA), L-iduronic acid (IduA), or D-xylose (Xyl). The enzyme is able to degrade p-nitrophenyl-alpha-L-rhamnopyranoside (PNP-Rha) in vitro. Incubating the enzyme with the products obtained after degradation with ulvan lyase and beta-glucuronyl hydrolase (i.e. the trisaccharides beta-alpha-L-Rha3S-IduA-Rha3S and beta-alpha-L-Rha3S-GlcA-Rha3S) showed no degradation, suggesting that the enzyme is active on neutral rhamnose and that desulfation of the oligosaccharide must be achieved before cleavage of rhamnose. The polypeptide is Alpha-L-rhamnosidase (Alteromonas sp. (strain LOR)).